The chain runs to 371 residues: Bifunctional enzyme IspD/IspF (371 aa).

The 2-C-methyl-D-erythritol 4-phosphate cytidylyltransferase stretch occupies residues 1–214 (MNSCFIILAG…NSDIKFNNLI (214 aa)). The segment at 215–371 (KFGIGFDVHR…EVIASVIKND (157 aa)) is 2-C-methyl-D-erythritol 2,4-cyclodiphosphate synthase. 2 residues coordinate a divalent metal cation: Asp-221 and His-223. Residues 221–223 (DVH) and 247–248 (HS) contribute to the 4-CDP-2-C-methyl-D-erythritol 2-phosphate site. A divalent metal cation is bound at residue His-255. 4-CDP-2-C-methyl-D-erythritol 2-phosphate is bound by residues 269 to 271 (DIG), 274 to 278 (FSDKN), and Lys-355.

This sequence in the N-terminal section; belongs to the IspD/TarI cytidylyltransferase family. IspD subfamily. It in the C-terminal section; belongs to the IspF family. The cofactor is a divalent metal cation.

It carries out the reaction 2-C-methyl-D-erythritol 4-phosphate + CTP + H(+) = 4-CDP-2-C-methyl-D-erythritol + diphosphate. It catalyses the reaction 4-CDP-2-C-methyl-D-erythritol 2-phosphate = 2-C-methyl-D-erythritol 2,4-cyclic diphosphate + CMP. It functions in the pathway isoprenoid biosynthesis; isopentenyl diphosphate biosynthesis via DXP pathway; isopentenyl diphosphate from 1-deoxy-D-xylulose 5-phosphate: step 2/6. The protein operates within isoprenoid biosynthesis; isopentenyl diphosphate biosynthesis via DXP pathway; isopentenyl diphosphate from 1-deoxy-D-xylulose 5-phosphate: step 4/6. Its function is as follows. Bifunctional enzyme that catalyzes the formation of 4-diphosphocytidyl-2-C-methyl-D-erythritol from CTP and 2-C-methyl-D-erythritol 4-phosphate (MEP) (IspD), and catalyzes the conversion of 4-diphosphocytidyl-2-C-methyl-D-erythritol 2-phosphate (CDP-ME2P) to 2-C-methyl-D-erythritol 2,4-cyclodiphosphate (ME-CPP) with a corresponding release of cytidine 5-monophosphate (CMP) (IspF). In Pelagibacter ubique (strain HTCC1062), this protein is Bifunctional enzyme IspD/IspF.